The following is a 488-amino-acid chain: Proline--tRNA ligase (488 aa).

Belongs to the class-II aminoacyl-tRNA synthetase family. ProS type 3 subfamily. In terms of assembly, homodimer.

It is found in the cytoplasm. The enzyme catalyses tRNA(Pro) + L-proline + ATP = L-prolyl-tRNA(Pro) + AMP + diphosphate. Its function is as follows. Catalyzes the attachment of proline to tRNA(Pro) in a two-step reaction: proline is first activated by ATP to form Pro-AMP and then transferred to the acceptor end of tRNA(Pro). This is Proline--tRNA ligase from Symbiobacterium thermophilum (strain DSM 24528 / JCM 14929 / IAM 14863 / T).